Consider the following 51-residue polypeptide: Nawaprin (51 aa).

The 50-residue stretch at 1–50 (NEKSGSCPDMSMPIPPLGICKTLCNSDSGCPNVQKCCKNGCGFMTCTTPV) folds into the WAP domain. 4 cysteine pairs are disulfide-bonded: C7–C37, C20–C41, C24–C36, and C30–C46.

In terms of tissue distribution, expressed by the venom gland.

It localises to the secreted. Functionally, damages membranes of susceptible bacteria. Has no hemolytic activity. Not toxic to mice. Does not inhibit the proteinases elastase and cathepsin G. This Naja nigricollis (Black-necked spitting cobra) protein is Nawaprin.